The following is a 750-amino-acid chain: K(+)-insensitive pyrophosphate-energized proton pump (750 aa).

The next 5 membrane-spanning stretches (helical) occupy residues 1 to 21, 51 to 71, 78 to 98, 133 to 153, and 161 to 181; these read MYGL…YQGI, FIII…GGLN, VVFI…VAWF, IGML…LFIP, and FIGF…AGGI. Lys184 provides a ligand contact to substrate. Positions 187, 191, and 216 each coordinate Mg(2+). The next 6 helical transmembrane spans lie at 227-247, 257-277, 301-321, 327-347, 391-411, and 420-440; these read DGFE…LLAI, LVWI…SYWV, LVWL…YMLI, GTMW…GALI, WMGL…TLGL, and VFAF…TIAV. Mg(2+) is bound at residue Asp448. 4 helical membrane-spanning segments follow: residues 503-523, 538-558, 607-627, and 629-649; these read VLIG…IMIL, ILWP…YWFT, GMIN…CLES, and LFIG…IFMA. Asp656, Asp681, and Asp685 together coordinate Ca(2+). Lys688 provides a ligand contact to substrate. 2 helical membrane passes run 694-714 and 716-736; these read ALNP…ELAI and LPTT…LVFV.

Belongs to the H(+)-translocating pyrophosphatase (TC 3.A.10) family. K(+)-insensitive subfamily. As to quaternary structure, homodimer. It depends on Mg(2+) as a cofactor.

It localises to the cell inner membrane. The catalysed reaction is diphosphate + H2O + H(+)(in) = 2 phosphate + 2 H(+)(out). Proton pump that utilizes the energy of pyrophosphate hydrolysis as the driving force for proton movement across the membrane. Generates a proton motive force. In Chlorobaculum tepidum (strain ATCC 49652 / DSM 12025 / NBRC 103806 / TLS) (Chlorobium tepidum), this protein is K(+)-insensitive pyrophosphate-energized proton pump.